Consider the following 714-residue polypeptide: Fatty acid oxidation complex subunit alpha (714 aa).

The interval 1 to 190 is enoyl-CoA hydratase; the sequence is MEMASAFTLN…KLGLVDDVVP (190 aa). The interval 306-714 is 3-hydroxyacyl-CoA dehydrogenase; the sequence is APLNSVGILG…FWKTTATDLQ (409 aa).

The protein in the N-terminal section; belongs to the enoyl-CoA hydratase/isomerase family. It in the central section; belongs to the 3-hydroxyacyl-CoA dehydrogenase family. Heterotetramer of two alpha chains (FadJ) and two beta chains (FadI).

It is found in the cytoplasm. The enzyme catalyses a (3S)-3-hydroxyacyl-CoA = a (2E)-enoyl-CoA + H2O. It catalyses the reaction a 4-saturated-(3S)-3-hydroxyacyl-CoA = a (3E)-enoyl-CoA + H2O. The catalysed reaction is a (3S)-3-hydroxyacyl-CoA + NAD(+) = a 3-oxoacyl-CoA + NADH + H(+). It carries out the reaction (3S)-3-hydroxybutanoyl-CoA = (3R)-3-hydroxybutanoyl-CoA. The protein operates within lipid metabolism; fatty acid beta-oxidation. Functionally, catalyzes the formation of a hydroxyacyl-CoA by addition of water on enoyl-CoA. Also exhibits 3-hydroxyacyl-CoA epimerase and 3-hydroxyacyl-CoA dehydrogenase activities. This is Fatty acid oxidation complex subunit alpha from Escherichia coli O45:K1 (strain S88 / ExPEC).